The chain runs to 494 residues: Gram-negative bacteria-binding protein 1 (494 aa).

Positions 1–19 (MPGLCIGILLLIGFGCTTA) are cleaved as a signal peptide. One can recognise a CBM39 domain in the interval 20-120 (YKIPTPTVEL…QPLPVCNLGG (101 aa)). N-linked (GlcNAc...) asparagine glycans are attached at residues Asn56 and Asn81. The interval 126 to 160 (GCSPGDDDFTDDNQLSTEDSALEPTAPSVCEPSES) is disordered. A GH16 domain is found at 135 to 494 (TDDNQLSTED…DYVRVFATDN (360 aa)). Asn185 is a glycosylation site (N-linked (GlcNAc...) asparagine).

It belongs to the insect beta-1,3-glucan binding protein family.

It is found in the cell membrane. Plays a key role in innate immunity by acting as a pattern recognition receptor for beta-1,3-glucan from fungi and lipopolysaccharide from Gram-negative bacteria. Upon recognition of invading microorganism-derived products, acts upstream of protease spz processing enzyme SPE to activate the Toll pathway and to induce the expression of antimicrobial peptides drosomycin, cecropin and attacin. The chain is Gram-negative bacteria-binding protein 1 from Drosophila melanogaster (Fruit fly).